The primary structure comprises 853 residues: DNA mismatch repair protein MutS (853 aa).

614–621 (GPNMGGKS) contributes to the ATP binding site.

The protein belongs to the DNA mismatch repair MutS family.

This protein is involved in the repair of mismatches in DNA. It is possible that it carries out the mismatch recognition step. This protein has a weak ATPase activity. This is DNA mismatch repair protein MutS from Escherichia coli O6:H1 (strain CFT073 / ATCC 700928 / UPEC).